The primary structure comprises 95 residues: Aspartyl/glutamyl-tRNA(Asn/Gln) amidotransferase subunit C (95 aa).

Belongs to the GatC family. Heterotrimer of A, B and C subunits.

The catalysed reaction is L-glutamyl-tRNA(Gln) + L-glutamine + ATP + H2O = L-glutaminyl-tRNA(Gln) + L-glutamate + ADP + phosphate + H(+). It catalyses the reaction L-aspartyl-tRNA(Asn) + L-glutamine + ATP + H2O = L-asparaginyl-tRNA(Asn) + L-glutamate + ADP + phosphate + 2 H(+). Its function is as follows. Allows the formation of correctly charged Asn-tRNA(Asn) or Gln-tRNA(Gln) through the transamidation of misacylated Asp-tRNA(Asn) or Glu-tRNA(Gln) in organisms which lack either or both of asparaginyl-tRNA or glutaminyl-tRNA synthetases. The reaction takes place in the presence of glutamine and ATP through an activated phospho-Asp-tRNA(Asn) or phospho-Glu-tRNA(Gln). This is Aspartyl/glutamyl-tRNA(Asn/Gln) amidotransferase subunit C from Pseudomonas syringae pv. syringae (strain B728a).